A 374-amino-acid chain; its full sequence is 5-methylthioribulose-1-phosphate isomerase (374 aa).

The protein belongs to the RuBisCO large chain family. Type IV subfamily.

It catalyses the reaction 5-(methylsulfanyl)-D-ribulose 1-phosphate = S-methyl-1-thio-D-xylulose 5-phosphate. The enzyme catalyses 5-(methylsulfanyl)-D-ribulose 1-phosphate = 1-(methylsulfanyl)ribulose 5-phosphate. Its pathway is amino-acid biosynthesis; L-methionine biosynthesis via salvage pathway. It functions in the pathway metabolic intermediate biosynthesis; 1-deoxy-D-xylulose 5-phosphate biosynthesis. Catalyzes the conversion of 5-methylthio-D-ribulose 1-phosphate (MTRu-1P) to a 3:1 mixture of 1-methylthioxylulose 5-phosphate (MTXu-5P) and 1-methylthioribulose 5-phosphate (MTRu-5P). Involved in the MTA-isoprenoid shunt of the methionine salvage pathway. This Rhodospirillum rubrum (strain ATCC 11170 / ATH 1.1.1 / DSM 467 / LMG 4362 / NCIMB 8255 / S1) protein is 5-methylthioribulose-1-phosphate isomerase.